The following is a 123-amino-acid chain: Large ribosomal subunit protein uL18 (123 aa).

This sequence belongs to the universal ribosomal protein uL18 family. Part of the 50S ribosomal subunit; part of the 5S rRNA/L5/L18/L25 subcomplex. Contacts the 5S and 23S rRNAs.

Functionally, this is one of the proteins that bind and probably mediate the attachment of the 5S RNA into the large ribosomal subunit, where it forms part of the central protuberance. The protein is Large ribosomal subunit protein uL18 of Chlamydia pneumoniae (Chlamydophila pneumoniae).